The chain runs to 247 residues: EGF-like domain-containing protein C02B10.3 (247 aa).

An N-terminal signal peptide occupies residues 1–17 (MTGALCIVLFGVTMVTA). Topologically, residues 18–220 (ERPKIKDTHG…LCDKRCQKGH (203 aa)) are extracellular. EGF-like domains lie at 114–150 (FGTSCTPHMCQHNGTIAVGKKEIECICPPPWDGRFCE) and 180–213 (SGASCDVIKSCLNNGQLIDGKCKCPDGYYGDLCD). 4 cysteine pairs are disulfide-bonded: cysteine 123/cysteine 138, cysteine 140/cysteine 149, cysteine 190/cysteine 201, and cysteine 203/cysteine 212. Asparagine 126 carries N-linked (GlcNAc...) asparagine glycosylation. Residues 221–240 (VTCSTCSSFIPAALFAIILL) traverse the membrane as a helical segment. The Cytoplasmic portion of the chain corresponds to 241 to 247 (CVNKFNY).

Its subcellular location is the membrane. The chain is EGF-like domain-containing protein C02B10.3 from Caenorhabditis elegans.